Reading from the N-terminus, the 101-residue chain is Small ribosomal subunit protein bS6 (101 aa).

This sequence belongs to the bacterial ribosomal protein bS6 family.

Its function is as follows. Binds together with bS18 to 16S ribosomal RNA. This Oleidesulfovibrio alaskensis (strain ATCC BAA-1058 / DSM 17464 / G20) (Desulfovibrio alaskensis) protein is Small ribosomal subunit protein bS6.